Consider the following 656-residue polypeptide: Nuclear pore complex protein Nup85 (656 aa).

N-acetylmethionine is present on M1. At K92 the chain carries N6-acetyllysine. S223 carries the phosphoserine modification.

This sequence belongs to the nucleoporin Nup85 family. As to quaternary structure, component of the nuclear pore complex (NPC). Component of the NPC Nup107-160 subcomplex, consisting of at least NUP107, NUP98/Nup96, NUP160, NUP133, NUP85, NUP37, NUP43 and SEC13. Interacts with NUP160, NUP133 and SEC13. Interacts with NUP37, NUP107 and NUP43. Interacts with CCR2.

Its subcellular location is the nucleus. The protein localises to the nuclear pore complex. The protein resides in the chromosome. It is found in the centromere. It localises to the kinetochore. Its subcellular location is the cytoplasm. The protein localises to the cytoskeleton. The protein resides in the spindle. It is found in the nucleus membrane. In terms of biological role, essential component of the nuclear pore complex (NPC) that seems to be required for NPC assembly and maintenance. As part of the NPC Nup107-160 subcomplex plays a role in RNA export and in tethering NUP96/Nup98 and NUP153 to the nucleus. The Nup107-160 complex seems to be required for spindle assembly during mitosis. NUP85 is required for membrane clustering of CCL2-activated CCR2. Seems to be involved in CCR2-mediated chemotaxis of monocytes and may link activated CCR2 to the phosphatidyl-inositol 3-kinase-Rac-lammellipodium protrusion cascade. Involved in nephrogenesis. The chain is Nuclear pore complex protein Nup85 (NUP85) from Homo sapiens (Human).